The sequence spans 330 residues: D-lactate dehydrogenase (330 aa).

NAD(+) is bound by residues 155–156 (RI), D175, 206–207 (MP), N212, 233–235 (MAR), and D259. R235 is a catalytic residue. The active site involves E264. H296 acts as the Proton donor in catalysis.

It belongs to the D-isomer specific 2-hydroxyacid dehydrogenase family.

It catalyses the reaction (R)-lactate + NAD(+) = pyruvate + NADH + H(+). The protein is D-lactate dehydrogenase (ldhD) of Streptococcus agalactiae serotype III (strain NEM316).